A 1561-amino-acid chain; its full sequence is Rho GTPase-activating protein 190 (1561 aa).

4 consecutive FF domains span residues Tyr252–Lys320, Tyr365–Ser419, Lys426–Asp480, and Ile482–Phe547. The pG1 pseudoGTPase domain occupies Ser592–Leu765. In terms of domain architecture, pG2 pseudoGTPase spans Arg766–Glu926. 5 positions are modified to phosphoserine: Ser973, Ser975, Ser985, Ser988, and Ser996. Positions Lys1054–Cys1074 are disordered. The region spanning Ala1349–Phe1552 is the Rho-GAP domain.

Negatively regulated by integrin, bsk and Src/Src64B. Its function is as follows. GTPase-activating protein (GAP) for RhoA/Rho1 that plays an essential role in the stability of dorsal branches of mushroom body (MB) neurons. The MB neurons are the center for olfactory learning and memory. Acts by converting RhoA/Rho1 to an inactive GDP-bound state, leading to repress the RhoA/Rho1-Drok-MRLC signaling pathway thereby maintaining axon branch stability. This is Rho GTPase-activating protein 190 (RhoGAPp190) from Drosophila melanogaster (Fruit fly).